We begin with the raw amino-acid sequence, 613 residues long: Chaperone protein DnaK (613 aa).

Thr173 is subject to Phosphothreonine; by autocatalysis. The interval 577 to 613 is disordered; sequence AKQAQAQQEGGAEGAQKADDNVVDAEYEEVNDDQEKK. Residues 597–613 show a composition bias toward acidic residues; sequence NVVDAEYEEVNDDQEKK.

Belongs to the heat shock protein 70 family.

Functionally, acts as a chaperone. This Bacillus pumilus (strain SAFR-032) protein is Chaperone protein DnaK.